The sequence spans 238 residues: 2,3,4,5-tetrahydropyridine-2,6-dicarboxylate N-acetyltransferase (238 aa).

Belongs to the transferase hexapeptide repeat family. DapH subfamily.

The catalysed reaction is (S)-2,3,4,5-tetrahydrodipicolinate + acetyl-CoA + H2O = L-2-acetamido-6-oxoheptanedioate + CoA. It participates in amino-acid biosynthesis; L-lysine biosynthesis via DAP pathway; LL-2,6-diaminopimelate from (S)-tetrahydrodipicolinate (acetylase route): step 1/3. Catalyzes the transfer of an acetyl group from acetyl-CoA to tetrahydrodipicolinate. This Clostridioides difficile (strain 630) (Peptoclostridium difficile) protein is 2,3,4,5-tetrahydropyridine-2,6-dicarboxylate N-acetyltransferase.